A 385-amino-acid chain; its full sequence is 8-amino-7-oxononanoate synthase (385 aa).

Arg-21 contributes to the substrate binding site. A pyridoxal 5'-phosphate-binding site is contributed by 108 to 109 (GF). His-133 contributes to the substrate binding site. Positions 179, 207, and 233 each coordinate pyridoxal 5'-phosphate. An N6-(pyridoxal phosphate)lysine modification is found at Lys-236. Residue Thr-352 coordinates substrate.

This sequence belongs to the class-II pyridoxal-phosphate-dependent aminotransferase family. BioF subfamily. Homodimer. Pyridoxal 5'-phosphate is required as a cofactor.

The enzyme catalyses 6-carboxyhexanoyl-[ACP] + L-alanine + H(+) = (8S)-8-amino-7-oxononanoate + holo-[ACP] + CO2. It participates in cofactor biosynthesis; biotin biosynthesis. Functionally, catalyzes the decarboxylative condensation of pimeloyl-[acyl-carrier protein] and L-alanine to produce 8-amino-7-oxononanoate (AON), [acyl-carrier protein], and carbon dioxide. The chain is 8-amino-7-oxononanoate synthase from Salmonella paratyphi A (strain ATCC 9150 / SARB42).